The following is a 127-amino-acid chain: MKWQGKSARKPTGGRLVPARGKRKYELGREPAETLVGPIRVKKIRTRGGNQKLRLLKADVASVSDPVTGATKLVKIETVVDNPANRHYVRRNIITRGAVIRTEIGEARVLSRPGQDGVVNAVLLPKH.

Positions 1 to 24 are disordered; that stretch reads MKWQGKSARKPTGGRLVPARGKRK.

It belongs to the eukaryotic ribosomal protein eS8 family. In terms of assembly, part of the 30S ribosomal subunit.

The sequence is that of Small ribosomal subunit protein eS8 from Methanothrix thermoacetophila (strain DSM 6194 / JCM 14653 / NBRC 101360 / PT) (Methanosaeta thermophila).